The chain runs to 1293 residues: DNA-directed RNA polymerase subunit beta' (1293 aa).

Residues cysteine 60, cysteine 62, cysteine 75, and cysteine 78 each contribute to the Zn(2+) site. Residues aspartate 535, aspartate 537, and aspartate 539 each contribute to the Mg(2+) site. Residues cysteine 877, cysteine 953, cysteine 960, and cysteine 963 each coordinate Zn(2+).

The protein belongs to the RNA polymerase beta' chain family. In terms of assembly, the RNAP catalytic core consists of 2 alpha, 1 beta, 1 beta' and 1 omega subunit. When a sigma factor is associated with the core the holoenzyme is formed, which can initiate transcription. Mg(2+) serves as cofactor. Zn(2+) is required as a cofactor.

It catalyses the reaction RNA(n) + a ribonucleoside 5'-triphosphate = RNA(n+1) + diphosphate. In terms of biological role, DNA-dependent RNA polymerase catalyzes the transcription of DNA into RNA using the four ribonucleoside triphosphates as substrates. This chain is DNA-directed RNA polymerase subunit beta', found in Kineococcus radiotolerans (strain ATCC BAA-149 / DSM 14245 / SRS30216).